Reading from the N-terminus, the 29-residue chain is Cytochrome b6-f complex subunit 8 (29 aa).

The chain crosses the membrane as a helical span at residues 3 to 23 (LITITWASVMVAFTFSLSLVV).

Belongs to the PetN family. As to quaternary structure, the 4 large subunits of the cytochrome b6-f complex are cytochrome b6, subunit IV (17 kDa polypeptide, PetD), cytochrome f and the Rieske protein, while the 4 small subunits are PetG, PetL, PetM and PetN. The complex functions as a dimer.

It is found in the plastid. The protein resides in the chloroplast thylakoid membrane. Component of the cytochrome b6-f complex, which mediates electron transfer between photosystem II (PSII) and photosystem I (PSI), cyclic electron flow around PSI, and state transitions. The protein is Cytochrome b6-f complex subunit 8 of Chaetosphaeridium globosum (Charophycean green alga).